The following is a 261-amino-acid chain: Pyridoxine-5'-phosphate oxidase (261 aa).

42–45 is a binding site for pyridoxal 5'-phosphate; that stretch reads RGDR. 95 to 98 contacts FMN; the sequence is RMLL. Lys-100 lines the pyridoxal 5'-phosphate pocket. FMN is bound by residues 110–111, 116–117, and Gln-139; these read FT and RK. 3 residues coordinate pyridoxal 5'-phosphate: Tyr-157, Arg-161, and Ser-165. Residues 174 to 175 and Trp-219 each bind FMN; that span reads QS. 225–227 lines the pyridoxal 5'-phosphate pocket; that stretch reads RLH. Arg-229 contributes to the FMN binding site. At Thr-238 the chain carries Phosphothreonine. Ser-241 is modified (phosphoserine).

This sequence belongs to the pyridoxamine 5'-phosphate oxidase family. In terms of assembly, homodimer. FMN serves as cofactor. As to expression, ubiquitous. Expressed in liver, brain, lung, prostate and stomach (at protein level).

It carries out the reaction pyridoxine 5'-phosphate + O2 = pyridoxal 5'-phosphate + H2O2. The catalysed reaction is pyridoxamine 5'-phosphate + O2 + H2O = pyridoxal 5'-phosphate + H2O2 + NH4(+). It participates in cofactor metabolism; pyridoxal 5'-phosphate salvage; pyridoxal 5'-phosphate from pyridoxamine 5'-phosphate: step 1/1. Its pathway is cofactor metabolism; pyridoxal 5'-phosphate salvage; pyridoxal 5'-phosphate from pyridoxine 5'-phosphate: step 1/1. Functionally, catalyzes the oxidation of either pyridoxine 5'-phosphate (PNP) or pyridoxamine 5'-phosphate (PMP) into pyridoxal 5'-phosphate (PLP). In Homo sapiens (Human), this protein is Pyridoxine-5'-phosphate oxidase (PNPO).